The primary structure comprises 311 residues: Heme A synthase (311 aa).

Residues 1 to 6 (MQRFIK) are Cytoplasmic-facing. A helical transmembrane segment spans residues 7-27 (WLAVITSLDLLIVLLGGALVT). Residues 28–62 (KTGSGQGCGKSWPLCNGEFVPSNLSMETIIELSHR) are Extracellular-facing. A disulfide bridge connects residues cysteine 35 and cysteine 42. The active site involves glutamate 58. Residue histidine 61 coordinates heme o. A helical membrane pass occupies residues 63–83 (LTSGSAGILVTLLCILSWKYY). At 84–91 (KHVRETKT) the chain is on the cytoplasmic side. A helical membrane pass occupies residues 92–112 (LAILSFVFLVAQALMGAAAVV). Over 113–121 (WGQMPAVLA) the chain is Extracellular. A helical membrane pass occupies residues 122–142 (IHFGISLISFASVILLTCLIF). Histidine 123 is a heme o binding site. Over 143-159 (EIDQKFDARSLIMDKKM) the chain is Cytoplasmic. The chain crosses the membrane as a helical span at residues 160–180 (KFHIYGVTIYCYLVVYTGALV). Over 181 to 211 (RHERASLACPDFPLCSKNRPMPTQLHEWVQM) the chain is Extracellular. Cysteines 189 and 195 form a disulfide. The helical transmembrane segment at 212 to 232 (GHRLAAMLIFVWILYAMILAI) threads the bilayer. Residue histidine 213 coordinates heme b. The Cytoplasmic portion of the chain corresponds to 233–243 (RHYKQQPVVYW). The helical transmembrane segment at 244–264 (GWIISFILVTLQAIVGILVVF) threads the bilayer. Residues 265–271 (TNASLAM) are Extracellular-facing. The chain crosses the membrane as a helical span at residues 272–292 (ALLHSLFISCLFAVLCYLVML). A heme b-binding site is contributed by histidine 275. Topologically, residues 293-311 (GTRSKVNAKEAASTSKQTK) are cytoplasmic.

It belongs to the COX15/CtaA family. Type 1 subfamily. As to quaternary structure, interacts with CtaB. Requires heme b as cofactor.

The protein localises to the cell membrane. The catalysed reaction is Fe(II)-heme o + 2 A + H2O = Fe(II)-heme a + 2 AH2. The protein operates within porphyrin-containing compound metabolism; heme A biosynthesis; heme A from heme O: step 1/1. Its function is as follows. Catalyzes the conversion of heme O to heme A by two successive hydroxylations of the methyl group at C8. The first hydroxylation forms heme I, the second hydroxylation results in an unstable dihydroxymethyl group, which spontaneously dehydrates, resulting in the formyl group of heme A. In Bacillus cereus (strain 03BB102), this protein is Heme A synthase.